The following is an 84-amino-acid chain: uncharacterized protein (84 aa).

The chain crosses the membrane as a helical span at residues T13–L35. Residues L41–K84 adopt a coiled-coil conformation.

The protein resides in the host membrane. This is an uncharacterized protein from Sulfolobus islandicus rod-shaped virus 1 (SIRV-1).